Here is a 936-residue protein sequence, read N- to C-terminus: Sine oculis-binding protein homolog A (936 aa).

Residues 1–14 (MAEMEKEGRPPESK) show a composition bias toward basic and acidic residues. 2 disordered regions span residues 1 to 46 (MAEM…GQAG) and 108 to 151 (ASTL…HGGL). Positions 108–144 (ASTLENSSGSPPHANSSGSTPTSRNGVTAESSVNPSS) are enriched in polar residues. 2 consecutive FCS-type zinc fingers follow at residues 169–207 (EDSS…KCFA) and 247–287 (LKTN…KCLN). Disordered regions lie at residues 311-330 (LPTS…LTPE), 336-424 (LSEL…VMTP), 486-511 (SPHL…HPAA), 574-632 (NPQR…KQTE), 697-727 (PPPA…DTYS), and 842-877 (DSAG…EDHA). Low complexity predominate over residues 349–382 (GATIAGPSGSTSGSPSEAGTVCSSSSSSSSSSSS). A compositionally biased stretch (pro residues) spans 395 to 404 (SLPPPHPPPI). Polar residues-rich tracts occupy residues 617–632 (PPNS…KQTE), 708–717 (DGSTSISTGT), and 850–859 (NDQSAITTGT).

This sequence belongs to the SOBP family.

Implicated in development of the cochlea. This Danio rerio (Zebrafish) protein is Sine oculis-binding protein homolog A (sobpa).